The following is a 556-amino-acid chain: 2-succinyl-5-enolpyruvyl-6-hydroxy-3-cyclohexene-1-carboxylate synthase (556 aa).

Belongs to the TPP enzyme family. MenD subfamily. Homodimer. Mg(2+) serves as cofactor. The cofactor is Mn(2+). Requires thiamine diphosphate as cofactor.

It catalyses the reaction isochorismate + 2-oxoglutarate + H(+) = 5-enolpyruvoyl-6-hydroxy-2-succinyl-cyclohex-3-ene-1-carboxylate + CO2. It participates in quinol/quinone metabolism; 1,4-dihydroxy-2-naphthoate biosynthesis; 1,4-dihydroxy-2-naphthoate from chorismate: step 2/7. It functions in the pathway quinol/quinone metabolism; menaquinone biosynthesis. Its function is as follows. Catalyzes the thiamine diphosphate-dependent decarboxylation of 2-oxoglutarate and the subsequent addition of the resulting succinic semialdehyde-thiamine pyrophosphate anion to isochorismate to yield 2-succinyl-5-enolpyruvyl-6-hydroxy-3-cyclohexene-1-carboxylate (SEPHCHC). The sequence is that of 2-succinyl-5-enolpyruvyl-6-hydroxy-3-cyclohexene-1-carboxylate synthase from Salmonella choleraesuis (strain SC-B67).